Here is a 924-residue protein sequence, read N- to C-terminus: Phosphatidate phosphatase LPIN1 (924 aa).

The N-LIP stretch occupies residues 1-108; sequence MNYVGQLAGQ…IPMYLATSPI (108 aa). Phosphoserine is present on residues S106 and S150. Disordered regions lie at residues 133 to 248 and 269 to 297; these read PTTA…DCQR and FHAS…ADRL. Residues 152 to 161 are compositionally biased toward basic residues; the sequence is GKKRRKRRRK. The Nuclear localization signal signature appears at 153 to 158; it reads KKRRKR. Residues 162–172 are compositionally biased toward basic and acidic residues; the sequence is AQLDNLKRDDN. The span at 176–193 shows a compositional bias: acidic residues; sequence SEDEDMFPIEMSSDEDTA. 2 stretches are compositionally biased toward polar residues: residues 218–229 and 273–284; these read PSISTHPQSASY and ESPSGSRPSTPK. Residues S285, S287, and S293 each carry the phosphoserine modification. A compositionally biased stretch (basic and acidic residues) spans 285–297; the sequence is SDSELVSKSADRL. T298 carries the phosphothreonine modification. Disordered regions lie at residues 314-426 and 446-490; these read QAAK…SRHL and LYFP…STSD. S328 carries the phosphoserine modification. Residues 343 to 358 are compositionally biased toward polar residues; sequence AIHSESSDTFSDQSPT. The residue at position 392 (S392) is a Phosphoserine. The span at 404 to 413 shows a compositional bias: polar residues; it reads NTAQSSSKTD. An N6-acetyllysine modification is found at K459. Polar residues predominate over residues 461 to 476; sequence ASDNGARSANQSPQSV. 3 positions are modified to phosphoserine: S468, S472, and S483. Residues K599 and K629 each participate in a glycyl lysine isopeptide (Lys-Gly) (interchain with G-Cter in SUMO) cross-link. The interval 627–649 is disordered; that stretch reads RIKHESSSSDEEHAAAKPSGSSH. A compositionally biased stretch (basic and acidic residues) spans 628–641; that stretch reads IKHESSSSDEEHAA. The residue at position 629 (K629) is an N6-acetyllysine. S634 and S635 each carry phosphoserine. The interval 658 to 864 is C-LIP; the sequence is YKKTLRLTSE…VNPKGELVQE (207 aa). Positions 712–716 match the DXDXT motif motif; it reads DIDGT. An LXXIL motif motif is present at residues 723–727; sequence LGHIL. S921 and S923 each carry phosphoserine.

It belongs to the lipin family. Interacts (via LXXIL motif) with PPARA. Interacts with PPARGC1A. Interaction with PPARA and PPARGC1A leads to the formation of a complex that modulates gene transcription. Interacts with MEF2C. The cofactor is Mg(2+). Post-translationally, phosphorylated at multiple sites in response to insulin. Phosphorylation is controlled by the mTOR signaling pathway. Phosphorylation is decreased by epinephrine. Phosphorylation may not directly affect the catalytic activity but may regulate the localization. Dephosphorylated by the CTDNEP1-CNEP1R1 complex. Phosphorylated at multiple sites by mTOR in response to insulin, leading to its inactivation. Phosphorylation does not affect the catalytic activity but regulates the localization. Phosphorylation is decreased by epinephrine. Dephosphorylated by the CTDNEP1-CNEP1R1 complex. Dephosphorylation following mTOR inhibition promotes its activity. In terms of processing, sumoylation is important in brain and is marginal in other tissues. Sumoylation facilitates nuclear localization of isoform 2 in neuronals cells and its transcriptional coactivator activity. Post-translationally, acetylation at Lys-459 and Lys-629 by KAT5 in response to fatty acids promotes translocation to the endoplasmic reticulum and synthesis of diacylglycerol. Specifically expressed in skeletal muscle. Also expressed prominently in adipose tissue, and testis. Lower expression also detected in kidney, lung, brain and liver. In terms of tissue distribution, predominant isoform in the liver. As to expression, predominant isoform in the brain.

Its subcellular location is the mitochondrion outer membrane. It is found in the cytoplasm. The protein resides in the nucleus membrane. The protein localises to the nucleus. It localises to the endoplasmic reticulum membrane. The enzyme catalyses a 1,2-diacyl-sn-glycero-3-phosphate + H2O = a 1,2-diacyl-sn-glycerol + phosphate. It catalyses the reaction 1-octadecanoyl-2-(4Z,7Z,10Z,13Z,16Z,19Z-docosahexaenoyl)-sn-glycero-3-phosphate + H2O = 1-octadecanoyl-2-(4Z,7Z,10Z,13Z,16Z,19Z-docosahexaenoyl)-sn-glycerol + phosphate. The catalysed reaction is 1-octadecanoyl-2-(5Z,8Z,11Z,14Z-eicosatetraenoyl)-sn-glycero-3-phosphate + H2O = 1-octadecanoyl-2-(5Z,8Z,11Z,14Z-eicosatetraenoyl)-sn-glycerol + phosphate. It carries out the reaction 1-octadecanoyl-2-(9Z,12Z-octadecadienoyl)-sn-glycero-3-phosphate + H2O = 1-octadecanoyl-2-(9Z,12Z)-octadecadienoyl-sn-glycerol + phosphate. The enzyme catalyses 1-octadecanoyl-2-(9Z-octadecenoyl)-sn-glycero-3-phosphate + H2O = 1-octadecanoyl-2-(9Z-octadecenoyl)-sn-glycerol + phosphate. It catalyses the reaction 1-hexadecanoyl-2-(4Z,7Z,10Z,13Z,16Z,19Z-docosahexaenoyl)-sn-glycero-3-phosphate + H2O = 1-hexadecanoyl-2-(4Z,7Z,10Z,13Z,16Z,19Z-docosahexaenoyl)-sn-glycerol + phosphate. The catalysed reaction is 1,2-dioctadecanoyl-sn-glycero-3-phosphate + H2O = 1,2-dioctadecanoyl-sn-glycerol + phosphate. It carries out the reaction 1-hexadecanoyl-2-(5Z,8Z,11Z,14Z-eicosatetraenoyl)-sn-glycero-3-phosphate + H2O = 1-hexadecanoyl-2-(5Z,8Z,11Z,14Z-eicosatetraenoyl)-sn-glycerol + phosphate. The enzyme catalyses 1-hexadecanoyl-2-(9Z,12Z-octadecadienoyl)-sn-glycero-3-phosphate + H2O = 1-hexadecanoyl-2-(9Z,12Z-octadecadienoyl)-sn-glycerol + phosphate. It catalyses the reaction 1-hexadecanoyl-2-(9Z-octadecenoyl)-sn-glycero-3-phosphate + H2O = 1-hexadecanoyl-2-(9Z-octadecenoyl)-sn-glycerol + phosphate. The catalysed reaction is 1,2-di-(4Z,7Z,10Z,13Z,16Z,19Z-docosahexaenoyl)-sn-glycero-3-phosphate + H2O = 1,2-di-(4Z,7Z,10Z,13Z,16Z,19Z-docosahexaenoyl)-sn-glycerol + phosphate. It carries out the reaction 1,2-di-(5Z,8Z,11Z,14Z)-eicosatetraenoyl-sn-glycero-3-phosphate + H2O = 1,2-di-(5Z,8Z,11Z,14Z)-eicosatetraenoyl-sn-glycerol + phosphate. The enzyme catalyses 1,2-di-(9Z,12Z-octadecadienoyl)-sn-glycero-3-phosphate + H2O = 1,2-di-(9Z,12Z-octadecadienoyl)-sn-glycerol + phosphate. It catalyses the reaction 1,2-di-(9Z-octadecenoyl)-sn-glycero-3-phosphate + H2O = 1,2-di-(9Z-octadecenoyl)-sn-glycerol + phosphate. The catalysed reaction is 1,2-dihexadecanoyl-sn-glycero-3-phosphate + H2O = 1,2-dihexadecanoyl-sn-glycerol + phosphate. With respect to regulation, inhibited by N-ethylmaleimide treatment. Its function is as follows. Acts as a magnesium-dependent phosphatidate phosphatase enzyme which catalyzes the conversion of phosphatidic acid to diacylglycerol during triglyceride, phosphatidylcholine and phosphatidylethanolamine biosynthesis and therefore controls the metabolism of fatty acids at different levels. Is involved in adipocyte differentiation. Also acts as nuclear transcriptional coactivator for PPARGC1A/PPARA regulatory pathway to modulate lipid metabolism gene expression. In terms of biological role, recruited at the mitochondrion outer membrane and is involved in mitochondrial fission by converting phosphatidic acid to diacylglycerol. In Mus musculus (Mouse), this protein is Phosphatidate phosphatase LPIN1 (Lpin1).